We begin with the raw amino-acid sequence, 175 residues long: Adenine phosphoribosyltransferase (175 aa).

This sequence belongs to the purine/pyrimidine phosphoribosyltransferase family. In terms of assembly, homodimer.

It localises to the cytoplasm. It carries out the reaction AMP + diphosphate = 5-phospho-alpha-D-ribose 1-diphosphate + adenine. It functions in the pathway purine metabolism; AMP biosynthesis via salvage pathway; AMP from adenine: step 1/1. In terms of biological role, catalyzes a salvage reaction resulting in the formation of AMP, that is energically less costly than de novo synthesis. The chain is Adenine phosphoribosyltransferase from Caldicellulosiruptor bescii (strain ATCC BAA-1888 / DSM 6725 / KCTC 15123 / Z-1320) (Anaerocellum thermophilum).